The sequence spans 619 residues: Zinc finger protein 131 (619 aa).

One can recognise a BTB domain in the interval 34–98 (TDITLIVDGH…TYTAKLMIQG (65 aa)). The Nuclear localization signal 1 motif lies at 137–148 (TGKNEAKKRKIA). At serine 231 the chain carries Phosphoserine. 3 consecutive C2H2-type zinc fingers follow at residues 261–283 (FHCE…MKSH), 288–311 (FKCE…NCYH), and 328–350 (HICQ…LRKH). Residues lysine 289 and lysine 295 each participate in a glycyl lysine isopeptide (Lys-Gly) (interchain with G-Cter in SUMO2) cross-link. A Nuclear localization signal 2 motif is present at residues 317–328 (VSKKQRTGKKIH). The C2H2-type 4; degenerate zinc-finger motif lies at 356–381 (FECSNCHERFARNSTLKCHLTACQTG). 2 C2H2-type zinc fingers span residues 392–414 (YECQ…LVIH) and 420–443 (NHCT…SDAH). Composition is skewed to basic and acidic residues over residues 574 to 587 (QEER…AAME) and 595 to 612 (LETK…ENDR). The interval 574–619 (QEEREPNHADAAMEEHEDAEGLETKPSEYSQARKTENDRTSLPVLE) is disordered. Residue lysine 598 forms a Glycyl lysine isopeptide (Lys-Gly) (interchain with G-Cter in SUMO) linkage.

The protein belongs to the krueppel C2H2-type zinc-finger protein family. Monosumoylated at Lys-598 by CBX4 and UHRF2. Sumoylation may potentiate ZNF131 inhibition of estrogen signaling. Sumoylation does not interfere with ubiquitination. Post-translationally, ubiquitinated. Ubiquitously expressed. Predominant expression is found in the developing central nervous system with strongest signals in the forebrain, midbrain, and hindbrain areas and in the neural tube.

Its subcellular location is the nucleus. Its function is as follows. May be involved in transcriptional regulation as a repressor of ESR1/ER-alpha signaling. Plays a role during development and organogenesis as well as in the function of the adult central nervous system. This is Zinc finger protein 131 (Znf131) from Mus musculus (Mouse).